Reading from the N-terminus, the 700-residue chain is Calpain-2 catalytic subunit (700 aa).

Alanine 2 carries the post-translational modification N-acetylalanine. The propeptide at alanine 2–glycine 19 is anchors to the small subunit. The region spanning leucine 45–threonine 344 is the Calpain catalytic domain. Residues isoleucine 89, glycine 91, and aspartate 96 each coordinate Ca(2+). The active site involves cysteine 105. Ca(2+) is bound by residues glutamate 175, glutamine 229, and lysine 230. Catalysis depends on residues histidine 262 and asparagine 286. Ca(2+) is bound by residues glutamate 292, aspartate 299, glutamine 319, and glutamate 323. The segment at proline 345–aspartate 514 is domain III. The tract at residues glutamate 515 to aspartate 529 is linker. Residues isoleucine 530 to leucine 700 form a domain IV region. Residues alanine 542, aspartate 545, glutamate 547, glutamate 552, aspartate 585, aspartate 587, serine 589, lysine 591, glutamate 596, aspartate 615, aspartate 617, serine 619, threonine 621, glutamate 626, aspartate 658, and asparagine 661 each coordinate Ca(2+). EF-hand domains lie at phenylalanine 572–glutamine 605 and threonine 602–lysine 637.

It belongs to the peptidase C2 family. In terms of assembly, forms a heterodimer with a small (regulatory) subunit (CAPNS1). Interacts with CPEB3; this leads to cleavage of CPEB3. Ca(2+) is required as a cofactor. Ubiquitous.

The protein localises to the cytoplasm. It is found in the cell membrane. The enzyme catalyses Broad endopeptidase specificity.. Activated by 200-1000 micromolar concentrations of calcium and inhibited by calpastatin. In terms of biological role, calcium-regulated non-lysosomal thiol-protease which catalyzes limited proteolysis of substrates involved in cytoskeletal remodeling and signal transduction. Proteolytically cleaves MYOC at 'Arg-226'. Proteolytically cleaves CPEB3 following neuronal stimulation which abolishes CPEB3 translational repressor activity, leading to translation of CPEB3 target mRNAs. The chain is Calpain-2 catalytic subunit (Capn2) from Mus musculus (Mouse).